Reading from the N-terminus, the 465-residue chain is Cysteine--tRNA ligase (465 aa).

C27 provides a ligand contact to Zn(2+). Residues 29-39 (PTVYNFFHIGN) carry the 'HIGH' region motif. C207, H232, and E236 together coordinate Zn(2+). The short motif at 264-268 (KMSKS) is the 'KMSKS' region element. K267 is a binding site for ATP.

It belongs to the class-I aminoacyl-tRNA synthetase family. Monomer. Requires Zn(2+) as cofactor.

It localises to the cytoplasm. It carries out the reaction tRNA(Cys) + L-cysteine + ATP = L-cysteinyl-tRNA(Cys) + AMP + diphosphate. This Clostridium botulinum (strain ATCC 19397 / Type A) protein is Cysteine--tRNA ligase.